Consider the following 228-residue polypeptide: Translin (228 aa).

The segment at 86–90 (RFHEH) is DNA/RNA binding. The segment at 177-198 (LDSGFRLLNLKNDSLRKRYDGL) is leucine-zipper. Lysine 187 carries the N6-acetyllysine modification. Position 190 is a phosphoserine (serine 190). The residue at position 199 (lysine 199) is an N6-acetyllysine.

Belongs to the translin family. In terms of assembly, ring-shaped heterooctamer of six TSN and two TSNAX subunits, DNA/RNA binding occurs inside the ring.

The protein localises to the cytoplasm. Its subcellular location is the nucleus. In terms of biological role, DNA-binding protein that specifically recognizes consensus sequences at the breakpoint junctions in chromosomal translocations, mostly involving immunoglobulin (Ig)/T-cell receptor gene segments. Seems to recognize single-stranded DNA ends generated by staggered breaks occurring at recombination hot spots. Exhibits both single-stranded and double-stranded endoribonuclease activity. May act as an activator of RNA-induced silencing complex (RISC) by facilitating endonucleolytic cleavage of the siRNA passenger strand. The chain is Translin (TSN) from Bos taurus (Bovine).